Consider the following 244-residue polypeptide: Haloacid dehalogenase-like hydrolase domain-containing protein 3 (244 aa).

The protein belongs to the HAD-like hydrolase superfamily.

This Xenopus laevis (African clawed frog) protein is Haloacid dehalogenase-like hydrolase domain-containing protein 3 (hdhd3).